A 344-amino-acid chain; its full sequence is Anthranilate phosphoribosyltransferase (344 aa).

5-phospho-alpha-D-ribose 1-diphosphate is bound by residues Gly-81, 84 to 85, Ser-89, 91 to 94, 109 to 117, and Ala-121; these read GD, NIST, and KHGNRALSS. Gly-81 contributes to the anthranilate binding site. Position 93 (Ser-93) interacts with Mg(2+). Asn-112 contributes to the anthranilate binding site. Arg-167 contacts anthranilate. 2 residues coordinate Mg(2+): Asp-226 and Glu-227.

This sequence belongs to the anthranilate phosphoribosyltransferase family. Homodimer. Mg(2+) is required as a cofactor.

It catalyses the reaction N-(5-phospho-beta-D-ribosyl)anthranilate + diphosphate = 5-phospho-alpha-D-ribose 1-diphosphate + anthranilate. It participates in amino-acid biosynthesis; L-tryptophan biosynthesis; L-tryptophan from chorismate: step 2/5. Functionally, catalyzes the transfer of the phosphoribosyl group of 5-phosphorylribose-1-pyrophosphate (PRPP) to anthranilate to yield N-(5'-phosphoribosyl)-anthranilate (PRA). The sequence is that of Anthranilate phosphoribosyltransferase from Azorhizobium caulinodans (strain ATCC 43989 / DSM 5975 / JCM 20966 / LMG 6465 / NBRC 14845 / NCIMB 13405 / ORS 571).